The sequence spans 458 residues: Exodeoxyribonuclease 7 large subunit (458 aa).

This sequence belongs to the XseA family. In terms of assembly, heterooligomer composed of large and small subunits.

It is found in the cytoplasm. It catalyses the reaction Exonucleolytic cleavage in either 5'- to 3'- or 3'- to 5'-direction to yield nucleoside 5'-phosphates.. Functionally, bidirectionally degrades single-stranded DNA into large acid-insoluble oligonucleotides, which are then degraded further into small acid-soluble oligonucleotides. The polypeptide is Exodeoxyribonuclease 7 large subunit (Escherichia coli O17:K52:H18 (strain UMN026 / ExPEC)).